Consider the following 150-residue polypeptide: Small ribosomal subunit protein uS13 (150 aa).

Belongs to the universal ribosomal protein uS13 family. In terms of assembly, part of the 30S ribosomal subunit. Forms a loose heterodimer with protein S19. Forms two bridges to the 50S subunit in the 70S ribosome.

Located at the top of the head of the 30S subunit, it contacts several helices of the 16S rRNA. In the 70S ribosome it contacts the 23S rRNA (bridge B1a) and protein L5 of the 50S subunit (bridge B1b), connecting the 2 subunits; these bridges are implicated in subunit movement. The polypeptide is Small ribosomal subunit protein uS13 (Methanocorpusculum labreanum (strain ATCC 43576 / DSM 4855 / Z)).